We begin with the raw amino-acid sequence, 357 residues long: Heat-inducible transcription repressor HrcA (357 aa).

The protein belongs to the HrcA family.

Negative regulator of class I heat shock genes (grpE-dnaK-dnaJ and groELS operons). Prevents heat-shock induction of these operons. The chain is Heat-inducible transcription repressor HrcA from Chlorobium luteolum (strain DSM 273 / BCRC 81028 / 2530) (Pelodictyon luteolum).